The sequence spans 501 residues: Phosphoethanolamine N-methyltransferase 1 (501 aa).

The S-adenosyl-L-homocysteine site is built by G72, R77, D93, D118, V119, and N137. S170, T175, G176, R180, and Y187 together coordinate phosphocholine. N-methylethanolamine phosphate-binding positions include 256 to 257 (QY) and Y265. Y265 contacts phosphocholine. S-adenosyl-L-homocysteine is bound by residues V274, S275, G301, D323, D349, C350, and R366. Positions 397, 411, 415, 417, and 483 each coordinate phosphocholine. Residues Y397, Y411, 415-417 (RGY), and K483 contribute to the N-methylethanolamine phosphate site.

It belongs to the class I-like SAM-binding methyltransferase superfamily. PEAMT family.

The catalysed reaction is phosphoethanolamine + S-adenosyl-L-methionine = N-methylethanolamine phosphate + S-adenosyl-L-homocysteine + H(+). It catalyses the reaction N-methylethanolamine phosphate + S-adenosyl-L-methionine = N,N-dimethylethanolamine phosphate + S-adenosyl-L-homocysteine + H(+). The enzyme catalyses N,N-dimethylethanolamine phosphate + S-adenosyl-L-methionine = phosphocholine + S-adenosyl-L-homocysteine + H(+). The protein operates within phospholipid metabolism; phosphatidylcholine biosynthesis; phosphocholine from phosphoethanolamine: step 1/1. Its function is as follows. Involved in phosphocholine biosynthesis. Catalyzes the N-methylation of phosphoethanolamine, phosphomonomethylethanolamine and phosphodimethylethanolamine, the three methylation steps required to convert phosphoethanolamine to phosphocholine (PC). May be involved in root development. This chain is Phosphoethanolamine N-methyltransferase 1, found in Zea mays (Maize).